Here is a 224-residue protein sequence, read N- to C-terminus: Homeobox protein Hox-B6 (224 aa).

The Antp-type hexapeptide motif lies at 127–132 (VYPWMQ). The segment at residues 146–205 (GRRGRQTYTRYQTLELEKEFHYNRYLTRRRRIEIAHALCLTERQIKIWFQNRRMKWKKES) is a DNA-binding region (homeobox). Residue serine 214 is modified to Phosphoserine.

The protein belongs to the Antp homeobox family.

Its subcellular location is the nucleus. Its function is as follows. Sequence-specific transcription factor which is part of a developmental regulatory system that provides cells with specific positional identities on the anterior-posterior axis. This Homo sapiens (Human) protein is Homeobox protein Hox-B6 (HOXB6).